The primary structure comprises 77 residues: Acyl carrier protein homolog (77 aa).

A Carrier domain is found at 1–76 (MSINIKDLIM…DLINAFEDVL (76 aa)). O-(pantetheine 4'-phosphoryl)serine is present on S36.

4'-phosphopantetheine is transferred from CoA to a specific serine of the apo-ACP-like protein.

The protein operates within lipid metabolism; fatty acid biosynthesis. Its function is as follows. Carrier of the growing fatty acid chain in fatty acid biosynthesis. This Ureaplasma parvum serovar 3 (strain ATCC 700970) protein is Acyl carrier protein homolog.